A 216-amino-acid chain; its full sequence is Ras-related protein Rab-5C (216 aa).

Positions 30, 31, 33, 34, 35, 36, 47, 48, 53, and 79 each coordinate GTP. Serine 35 provides a ligand contact to Mg(2+). 2 consecutive short sequence motifs (switch) follow at residues 45–57 and 78–94; these read QFHE…IGAA and AGQE…YRGA. Threonine 53 is a binding site for Mg(2+). A Phosphoserine; by LRRK2 modification is found at serine 85. GTP contacts are provided by asparagine 134, lysine 135, aspartate 137, alanine 165, and lysine 166. Residues 185–216 are disordered; sequence NEPQNATGAPGRNRGVDLQENNPASRSQCCSN. Over residues 203 to 216 the composition is skewed to polar residues; it reads QENNPASRSQCCSN. S-geranylgeranyl cysteine attachment occurs at residues cysteine 213 and cysteine 214.

It belongs to the small GTPase superfamily. Rab family. Interacts with EEA1. Interacts with INCA1. Interacts with GDI1, GDI2, CHML and CHM; phosphorylation at Ser-85 disrupts this interaction. Requires Mg(2+) as cofactor. Phosphorylation of Ser-85 in the switch II region by LRRK2 prevents the association of RAB regulatory proteins, including CHM, CHML and RAB GDP dissociation inhibitors GDI1 and GDI2. Post-translationally, (Microbial infection) Glycosylated on arginine residues by S.typhimurium protein Ssek3.

Its subcellular location is the cell membrane. The protein localises to the early endosome membrane. The protein resides in the melanosome. The catalysed reaction is GTP + H2O = GDP + phosphate + H(+). With respect to regulation, regulated by guanine nucleotide exchange factors (GEFs) which promote the exchange of bound GDP for free GTP. Regulated by GTPase activating proteins (GAPs) which increase the GTP hydrolysis activity. Inhibited by GDP dissociation inhibitors (GDIs). In terms of biological role, the small GTPases Rab are key regulators of intracellular membrane trafficking, from the formation of transport vesicles to their fusion with membranes. Rabs cycle between an inactive GDP-bound form and an active GTP-bound form that is able to recruit to membranes different sets of downstream effectors directly responsible for vesicle formation, movement, tethering and fusion. This is Ras-related protein Rab-5C from Homo sapiens (Human).